Consider the following 496-residue polypeptide: Gasdermin-E (496 aa).

Residues 1 to 56 form a membrane targeting domain region; that stretch reads MFAKATRNFLREVDADGDLIAVSNLNDSDKLQLLSLVTKKKRFWCWQRPKYQFLSL. C45 is modified (S-(2-succinyl)cysteine). A Glycyl lysine isopeptide (Lys-Gly) (interchain with G-Cter in ubiquitin) cross-link involves residue K120. S-(2-succinyl)cysteine occurs at positions 156, 168, and 180. K189 is covalently cross-linked (Glycyl lysine isopeptide (Lys-Gly) (interchain with G-Cter in ubiquitin)). C235, C371, C408, C417, and C489 each carry S-(2-succinyl)cysteine.

Belongs to the gasdermin family. Homooligomer; homooligomeric ring-shaped pore complex containing 27-28 subunits when inserted in the membrane. In terms of processing, cleavage at Asp-270 by CASP3 (mature and uncleaved precursor forms) or granzyme B (GZMB) relieves autoinhibition and is sufficient to initiate pyroptosis. Post-translationally, succination by the Krebs cycle intermediate fumarate, which leads to S-(2-succinyl)cysteine residues, inhibits processing by caspases, and ability to initiate pyroptosis. Succination modification is catalyzed by a non-enzymatic reaction caused by an accumulation of fumarate. Ubiquitinated at Lys-120 and Lys-189 via 'Lys-48'-linked polyubiquitin chains, leading to proteasomal degradation. Deubiquitinated by USP48, leading to increased stability. In terms of processing, palmitoylated. In terms of tissue distribution, expressed in cochlea. Low level of expression in heart, brain, placenta, lung, liver, skeletal muscle, kidney and pancreas, with highest expression in placenta.

The protein localises to the cell membrane. It is found in the cytoplasm. It localises to the cytosol. The full-length protein before cleavage is inactive: intramolecular interactions between N- and C-terminal domains mediate autoinhibition in the absence of activation signal. The intrinsic pyroptosis-inducing activity is carried by the released N-terminal moiety (Gasdermin-E, N-terminal) following cleavage by CASP3 or granzyme B (GZMB). Activated by NLRP1 in the absence of GSDMD expression: NLRP1 cleaves and activates CASP8, promoting downstream activation of CASP3 and subsequent activation of GSDME. Its activity is regulated as follows. (Microbial infection) Activated upon human coronavirus SARS-CoV-2 infection, leading to lung epithelial cell death. Activation takes place in response to (1) activation of NLRP1 and (2) inactivation of GSDMD following NLRP1 and GSDMD cleavage by the SARS-CoV-2 3C-like proteinase nsp5. Precursor of a pore-forming protein that converts non-inflammatory apoptosis to pyroptosis. This form constitutes the precursor of the pore-forming protein: upon cleavage, the released N-terminal moiety (Gasdermin-E, N-terminal) binds to membranes and forms pores, triggering pyroptosis. Functionally, pore-forming protein produced by cleavage by CASP3 or granzyme B (GZMB), which converts non-inflammatory apoptosis to pyroptosis or promotes granzyme-mediated pyroptosis, respectively. After cleavage, moves to the plasma membrane, homooligomerizes within the membrane and forms pores of 10-15 nanometers (nm) of inner diameter, allowing the release of mature interleukins (IL1B and IL16) and triggering pyroptosis. Binds to inner leaflet lipids, bisphosphorylated phosphatidylinositols, such as phosphatidylinositol (4,5)-bisphosphate. Cleavage by CASP3 switches CASP3-mediated apoptosis induced by TNF or danger signals, such as chemotherapy drugs, to pyroptosis. Mediates secondary necrosis downstream of the mitochondrial apoptotic pathway and CASP3 activation as well as in response to viral agents. Exhibits bactericidal activity. Cleavage by GZMB promotes tumor suppressor activity by triggering robust anti-tumor immunity. Suppresses tumors by mediating granzyme-mediated pyroptosis in target cells of natural killer (NK) cells: cleavage by granzyme B (GZMB), delivered to target cells from NK-cells, triggers pyroptosis of tumor cells and tumor suppression. May play a role in the p53/TP53-regulated cellular response to DNA damage. Its function is as follows. (Microbial infection) Pore-forming protein, which promotes maternal placental pyroptosis in response to Zika virus infection, contributing to adverse fetal outcomes. The protein is Gasdermin-E of Homo sapiens (Human).